The primary structure comprises 180 residues: ATP synthase subunit delta, chloroplastic (180 aa).

It belongs to the ATPase delta chain family. F-type ATPases have 2 components, F(1) - the catalytic core - and F(0) - the membrane proton channel. F(1) has five subunits: alpha(3), beta(3), gamma(1), delta(1), epsilon(1). CF(0) has four main subunits: a(1), b(1), b'(1) and c(10-14). The alpha and beta chains form an alternating ring which encloses part of the gamma chain. F(1) is attached to F(0) by a central stalk formed by the gamma and epsilon chains, while a peripheral stalk is formed by the delta, b and b' chains.

It is found in the plastid. It localises to the chloroplast thylakoid membrane. Its function is as follows. F(1)F(0) ATP synthase produces ATP from ADP in the presence of a proton or sodium gradient. F-type ATPases consist of two structural domains, F(1) containing the extramembraneous catalytic core and F(0) containing the membrane proton channel, linked together by a central stalk and a peripheral stalk. During catalysis, ATP synthesis in the catalytic domain of F(1) is coupled via a rotary mechanism of the central stalk subunits to proton translocation. Functionally, this protein is part of the stalk that links CF(0) to CF(1). It either transmits conformational changes from CF(0) to CF(1) or is implicated in proton conduction. In Rhodomonas salina (Cryptomonas salina), this protein is ATP synthase subunit delta, chloroplastic.